We begin with the raw amino-acid sequence, 258 residues long: Glycerol-3-phosphate acyltransferase (258 aa).

The next 6 membrane-spanning stretches (helical) occupy residues Ile-11 to Val-31, Leu-62 to Leu-82, Ser-94 to Phe-114, Leu-124 to Ile-144, Ala-160 to Trp-180, and Trp-212 to Trp-232.

Belongs to the PlsY family. As to quaternary structure, probably interacts with PlsX.

It localises to the cell membrane. It carries out the reaction an acyl phosphate + sn-glycerol 3-phosphate = a 1-acyl-sn-glycero-3-phosphate + phosphate. Its pathway is lipid metabolism; phospholipid metabolism. Functionally, catalyzes the transfer of an acyl group from acyl-phosphate (acyl-PO(4)) to glycerol-3-phosphate (G3P) to form lysophosphatidic acid (LPA). This enzyme utilizes acyl-phosphate as fatty acyl donor, but not acyl-CoA or acyl-ACP. The sequence is that of Glycerol-3-phosphate acyltransferase from Mycoplasma mycoides subsp. mycoides SC (strain CCUG 32753 / NCTC 10114 / PG1).